Consider the following 428-residue polypeptide: MSLKSIVRELREMRDGIGSMSRRAADGRAGGGRGGSRHSWPVLWSEQQQPPQQQQLQRQEHQQQQGRWANLPPELLLDVIQRVEASEATWPARRQVVACAAVCRSWREVTKEVVKTLEECGRITFPISLKQPGPREHPVQCFVRRDRATSTYLLYLGLSPSLHGENDKLLLAARKIRRATRTSFVISLVSNDFSLSSSTYVGKLKPNFLGTKFTIFDSQPPCDAVVLPNNRPSKRHFKQVSPRLPLGNYNVATVSYELTVLRNRGPRRMQCTMHSIPALCIQEGGKAPTPTGIIHSLDEQVPALSTSKGKEPAIEFSSTSLSADLSGPVCTNEVPLVLKNKAPRWHEQLQCWCLNFRGRVTVASVKNFQLVASVDPSLGIPAAEQEKVILQFGKIGKDIFTMDYRYPLSAFQAFAICLTSFDTKPACE.

A disordered region spans residues 17–65; it reads IGSMSRRAADGRAGGGRGGSRHSWPVLWSEQQQPPQQQQLQRQEHQQQQ. Over residues 47–65 the composition is skewed to low complexity; that stretch reads QQQPPQQQQLQRQEHQQQQ. Residues 65–117 form the F-box domain; that stretch reads QGRWANLPPELLLDVIQRVEASEATWPARRQVVACAAVCRSWREVTKEVVKTL.

It belongs to the TUB family. Ubiquitous.

This is Tubby-like F-box protein 5 (TULP5) from Oryza sativa subsp. japonica (Rice).